The primary structure comprises 263 residues: Probable ribosomal RNA small subunit methyltransferase A (263 aa).

S-adenosyl-L-methionine contacts are provided by Leu-12, Gly-37, Glu-58, Asp-83, and Asn-100.

This sequence belongs to the class I-like SAM-binding methyltransferase superfamily. rRNA adenine N(6)-methyltransferase family. RsmA subfamily.

The protein localises to the cytoplasm. In terms of biological role, specifically dimethylates two adjacent adenosines in the loop of a conserved hairpin near the 3'-end of 16S rRNA in the 30S particle. May play a critical role in biogenesis of 30S subunits. This Methanococcus maripaludis (strain C7 / ATCC BAA-1331) protein is Probable ribosomal RNA small subunit methyltransferase A.